Reading from the N-terminus, the 237-residue chain is Riboflavin kinase (237 aa).

The segment at 1–23 (MSLPNPDNRPLLIGPPTGPEAPF) is disordered. Mg(2+) contacts are provided by Thr-46 and Asn-48. The segment at 82–126 (VLYQKPPTSEPVMMDPVQQQQQQQQQQRNQQQQQEGGVGSAQQEK) is disordered. Over residues 99 to 115 (QQQQQQQQQQRNQQQQQ) the composition is skewed to low complexity. The active-site Nucleophile is Glu-158.

Belongs to the flavokinase family. It depends on Zn(2+) as a cofactor. Requires Mg(2+) as cofactor.

It carries out the reaction riboflavin + ATP = FMN + ADP + H(+). Its pathway is cofactor biosynthesis; FMN biosynthesis; FMN from riboflavin (ATP route): step 1/1. Catalyzes the phosphorylation of riboflavin (vitamin B2) to form flavin mononucleotide (FMN) coenzyme. The polypeptide is Riboflavin kinase (fmn1) (Neurospora crassa (strain ATCC 24698 / 74-OR23-1A / CBS 708.71 / DSM 1257 / FGSC 987)).